Here is a 301-residue protein sequence, read N- to C-terminus: GTP cyclohydrolase FolE2 (301 aa).

This sequence belongs to the GTP cyclohydrolase IV family.

The catalysed reaction is GTP + H2O = 7,8-dihydroneopterin 3'-triphosphate + formate + H(+). It participates in cofactor biosynthesis; 7,8-dihydroneopterin triphosphate biosynthesis; 7,8-dihydroneopterin triphosphate from GTP: step 1/1. Converts GTP to 7,8-dihydroneopterin triphosphate. In Pseudomonas savastanoi pv. phaseolicola (strain 1448A / Race 6) (Pseudomonas syringae pv. phaseolicola (strain 1448A / Race 6)), this protein is GTP cyclohydrolase FolE2.